A 1141-amino-acid chain; its full sequence is Isoleucine--tRNA ligase (1141 aa).

The 'HIGH' region signature appears at 50–60; it reads PSANGMPGIHH. The 'KMSKS' region motif lies at 689 to 693; the sequence is KMSKR. Lys692 is a binding site for ATP.

This sequence belongs to the class-I aminoacyl-tRNA synthetase family. IleS type 2 subfamily. Monomer. Zn(2+) is required as a cofactor.

Its subcellular location is the cytoplasm. It catalyses the reaction tRNA(Ile) + L-isoleucine + ATP = L-isoleucyl-tRNA(Ile) + AMP + diphosphate. In terms of biological role, catalyzes the attachment of isoleucine to tRNA(Ile). As IleRS can inadvertently accommodate and process structurally similar amino acids such as valine, to avoid such errors it has two additional distinct tRNA(Ile)-dependent editing activities. One activity is designated as 'pretransfer' editing and involves the hydrolysis of activated Val-AMP. The other activity is designated 'posttransfer' editing and involves deacylation of mischarged Val-tRNA(Ile). The protein is Isoleucine--tRNA ligase of Bacteroides fragilis (strain YCH46).